A 153-amino-acid polypeptide reads, in one-letter code: UPF0735 ACT domain-containing protein FN1487 (153 aa).

The ACT domain occupies 76–152 (SLHLSLKDRV…GIADIRITGS (77 aa)).

This sequence belongs to the UPF0735 family.

This Fusobacterium nucleatum subsp. nucleatum (strain ATCC 25586 / DSM 15643 / BCRC 10681 / CIP 101130 / JCM 8532 / KCTC 2640 / LMG 13131 / VPI 4355) protein is UPF0735 ACT domain-containing protein FN1487.